The following is a 295-amino-acid chain: Small ribosomal subunit protein uS2 (295 aa).

Residues 242-295 (APVEPTLARELAPEAPAPEAPAEEAPAAEAAPAAEAAPAAEAAPAEASSEEQAG) are disordered. Over residues 264 to 288 (EEAPAAEAAPAAEAAPAAEAAPAEA) the composition is skewed to low complexity.

The protein belongs to the universal ribosomal protein uS2 family.

The chain is Small ribosomal subunit protein uS2 from Phenylobacterium zucineum (strain HLK1).